The following is a 48-amino-acid chain: ATP synthase protein 8 (48 aa).

The helical transmembrane segment at 4–24 threads the bilayer; that stretch reads LVPFFFVNQVVFAFIVLTVLI.

Belongs to the ATPase protein 8 family. As to quaternary structure, F-type ATPases have 2 components, CF(1) - the catalytic core - and CF(0) - the membrane proton channel.

It localises to the mitochondrion membrane. In terms of biological role, mitochondrial membrane ATP synthase (F(1)F(0) ATP synthase or Complex V) produces ATP from ADP in the presence of a proton gradient across the membrane which is generated by electron transport complexes of the respiratory chain. F-type ATPases consist of two structural domains, F(1) - containing the extramembraneous catalytic core and F(0) - containing the membrane proton channel, linked together by a central stalk and a peripheral stalk. During catalysis, ATP synthesis in the catalytic domain of F(1) is coupled via a rotary mechanism of the central stalk subunits to proton translocation. Part of the complex F(0) domain. Minor subunit located with subunit a in the membrane. This Emericella nidulans (Aspergillus nidulans) protein is ATP synthase protein 8 (atp8).